The chain runs to 184 residues: HVA22-like protein c (184 aa).

A run of 3 helical transmembrane segments spans residues 13–33 (VLIK…YPLY), 51–71 (LTYW…SKPL), and 73–93 (WFPI…LPQF).

The protein belongs to the DP1 family. Predominantly expressed in flower buds and stem.

It is found in the membrane. In Arabidopsis thaliana (Mouse-ear cress), this protein is HVA22-like protein c (HVA22C).